A 61-amino-acid chain; its full sequence is Small ribosomal subunit protein uS14 (61 aa).

C24, C27, C40, and C43 together coordinate Zn(2+).

This sequence belongs to the universal ribosomal protein uS14 family. Zinc-binding uS14 subfamily. In terms of assembly, part of the 30S ribosomal subunit. Contacts proteins S3 and S10. Zn(2+) serves as cofactor.

In terms of biological role, binds 16S rRNA, required for the assembly of 30S particles and may also be responsible for determining the conformation of the 16S rRNA at the A site. The chain is Small ribosomal subunit protein uS14 from Carboxydothermus hydrogenoformans (strain ATCC BAA-161 / DSM 6008 / Z-2901).